The primary structure comprises 547 residues: Chaperonin GroEL (547 aa).

Residues 30–33 (TLGP), Lys-51, 87–91 (DGTTT), Gly-415, 479–481 (NAA), and Asp-495 each bind ATP. The tract at residues 525 to 547 (PKEDSPGAGAGMGGMGGMGGMDM) is disordered. Residues 532-547 (AGAGMGGMGGMGGMDM) are compositionally biased toward gly residues.

It belongs to the chaperonin (HSP60) family. Forms a cylinder of 14 subunits composed of two heptameric rings stacked back-to-back. Interacts with the co-chaperonin GroES.

The protein localises to the cytoplasm. It carries out the reaction ATP + H2O + a folded polypeptide = ADP + phosphate + an unfolded polypeptide.. Together with its co-chaperonin GroES, plays an essential role in assisting protein folding. The GroEL-GroES system forms a nano-cage that allows encapsulation of the non-native substrate proteins and provides a physical environment optimized to promote and accelerate protein folding. The polypeptide is Chaperonin GroEL (Nitrosomonas europaea (strain ATCC 19718 / CIP 103999 / KCTC 2705 / NBRC 14298)).